Reading from the N-terminus, the 361-residue chain is tRNA-specific 2-thiouridylase MnmA (361 aa).

Residues 11–18 (GMSGGVDS) and M37 contribute to the ATP site. C106 functions as the Nucleophile in the catalytic mechanism. C106 and C202 are joined by a disulfide. Position 130 (G130) interacts with ATP. The interaction with tRNA stretch occupies residues 152–154 (KDQ). The active-site Cysteine persulfide intermediate is the C202. The tract at residues 308–309 (RY) is interaction with tRNA.

It belongs to the MnmA/TRMU family.

It is found in the cytoplasm. It catalyses the reaction S-sulfanyl-L-cysteinyl-[protein] + uridine(34) in tRNA + AH2 + ATP = 2-thiouridine(34) in tRNA + L-cysteinyl-[protein] + A + AMP + diphosphate + H(+). Functionally, catalyzes the 2-thiolation of uridine at the wobble position (U34) of tRNA, leading to the formation of s(2)U34. The polypeptide is tRNA-specific 2-thiouridylase MnmA (Clostridium botulinum (strain Eklund 17B / Type B)).